The sequence spans 261 residues: Protein LIKE COV 2 (261 aa).

The segment at 1-38 (MAEGKEATTSSLSQGLTPHQDPDDAPKSPPNSPNSSTR) is disordered. Residues 1 to 56 (MAEGKEATTSSLSQGLTPHQDPDDAPKSPPNSPNSSTRKACYGVLQSWVSKKFMTG) lie on the Cytoplasmic side of the membrane. The segment covering 7–17 (ATTSSLSQGLT) has biased composition (polar residues). Residues 57–77 (FVVLFPVAVTFLITWWFIQFV) form a helical membrane-spanning segment. The Extracellular segment spans residues 78 to 91 (DGFFSPIYENLGVD). The helical transmembrane segment at 92 to 112 (IFGLGFITSVLFTFFVGIFAS) threads the bilayer. Over 113–261 (SWLGSTVFWL…HSLRVPLNRL (149 aa)) the chain is Cytoplasmic.

The protein belongs to the plant COV1 protein family.

It localises to the membrane. In Arabidopsis thaliana (Mouse-ear cress), this protein is Protein LIKE COV 2.